A 778-amino-acid polypeptide reads, in one-letter code: Probable glutamine--tRNA ligase (778 aa).

The segment covering Leu-188 to Ala-205 has biased composition (basic and acidic residues). Positions Leu-188–Asp-219 are disordered. A 'HIGH' region motif is present at residues Pro-273–His-283. ATP-binding positions include Glu-274–Asn-276 and His-280–Ala-286. Asp-306 and Tyr-441 together coordinate L-glutamine. Residues Thr-460, Arg-489–Leu-490, and Val-497–Lys-499 contribute to the ATP site. Positions Leu-496–Arg-500 match the 'KMSKS' region motif.

It belongs to the class-I aminoacyl-tRNA synthetase family.

The catalysed reaction is tRNA(Gln) + L-glutamine + ATP = L-glutaminyl-tRNA(Gln) + AMP + diphosphate. This Drosophila melanogaster (Fruit fly) protein is Probable glutamine--tRNA ligase.